A 311-amino-acid chain; its full sequence is Formimidoylglutamase (311 aa).

Positions 130, 155, 157, 159, 242, and 244 each coordinate Mn(2+).

It belongs to the arginase family. It depends on Mn(2+) as a cofactor.

The catalysed reaction is N-formimidoyl-L-glutamate + H2O = formamide + L-glutamate. Its pathway is amino-acid degradation; L-histidine degradation into L-glutamate; L-glutamate from N-formimidoyl-L-glutamate (hydrolase route): step 1/1. Catalyzes the conversion of N-formimidoyl-L-glutamate to L-glutamate and formamide. The protein is Formimidoylglutamase of Staphylococcus epidermidis (strain ATCC 35984 / DSM 28319 / BCRC 17069 / CCUG 31568 / BM 3577 / RP62A).